The chain runs to 159 residues: Protein-export protein SecB (159 aa).

The protein belongs to the SecB family. Homotetramer, a dimer of dimers. One homotetramer interacts with 1 SecA dimer.

Its subcellular location is the cytoplasm. Functionally, one of the proteins required for the normal export of preproteins out of the cell cytoplasm. It is a molecular chaperone that binds to a subset of precursor proteins, maintaining them in a translocation-competent state. It also specifically binds to its receptor SecA. This chain is Protein-export protein SecB, found in Aromatoleum aromaticum (strain DSM 19018 / LMG 30748 / EbN1) (Azoarcus sp. (strain EbN1)).